A 547-amino-acid chain; its full sequence is Phenylalanine--tRNA ligase beta subunit (547 aa).

The B5 domain maps to 269 to 344; the sequence is LDVRFMEVDV…IGYGYENITP (76 aa). Residues D322, D328, E331, and D332 each contribute to the Mg(2+) site.

This sequence belongs to the phenylalanyl-tRNA synthetase beta subunit family. Type 2 subfamily. In terms of assembly, tetramer of two alpha and two beta subunits. The cofactor is Mg(2+).

It localises to the cytoplasm. The catalysed reaction is tRNA(Phe) + L-phenylalanine + ATP = L-phenylalanyl-tRNA(Phe) + AMP + diphosphate + H(+). In Archaeoglobus fulgidus (strain ATCC 49558 / DSM 4304 / JCM 9628 / NBRC 100126 / VC-16), this protein is Phenylalanine--tRNA ligase beta subunit.